A 294-amino-acid polypeptide reads, in one-letter code: Glucosamine kinase GspK (294 aa).

Thr-12 lines the ATP pocket. Asp-101 lines the substrate pocket. An ATP-binding site is contributed by Thr-122. Substrate is bound by residues Gly-139–Glu-141 and Asp-146. Gly-202 contacts ATP.

The protein belongs to the eukaryotic-type N-acetylglucosamine kinase family.

The protein resides in the cytoplasm. It carries out the reaction D-glucosamine + ATP = D-glucosamine 6-phosphate + ADP + H(+). In terms of biological role, ATP-dependent kinase, which is specific for glucosamine. Does not show kinase activity with any other sugar. The chain is Glucosamine kinase GspK (gspK) from Vibrio cholerae serotype O1 (strain ATCC 39315 / El Tor Inaba N16961).